The primary structure comprises 426 residues: Dihydroorotase (426 aa).

Residues His59 and His61 each coordinate Zn(2+). Substrate is bound by residues 61-63 (HLR) and Asn93. Asp151, His178, and His232 together coordinate Zn(2+). Residue Asn279 coordinates substrate. Residue Asp306 coordinates Zn(2+). The active site involves Asp306. Residues His310 and 324 to 325 (FG) contribute to the substrate site.

The protein belongs to the metallo-dependent hydrolases superfamily. DHOase family. Class I DHOase subfamily. The cofactor is Zn(2+).

The catalysed reaction is (S)-dihydroorotate + H2O = N-carbamoyl-L-aspartate + H(+). Its pathway is pyrimidine metabolism; UMP biosynthesis via de novo pathway; (S)-dihydroorotate from bicarbonate: step 3/3. In terms of biological role, catalyzes the reversible cyclization of carbamoyl aspartate to dihydroorotate. This chain is Dihydroorotase, found in Brevibacillus brevis (strain 47 / JCM 6285 / NBRC 100599).